Reading from the N-terminus, the 369-residue chain is Bi-functional coumaroyl CoA and feruloyl CoA ortho-hydroxylase Diox2 (369 aa).

Residues 215 to 318 enclose the Fe2OG dioxygenase domain; the sequence is GSRRVNLNYY…RISVPLFVNP (104 aa). Residue Y224 participates in 2-oxoglutarate binding. 3 residues coordinate Fe cation: H239, D241, and H299. Residues R309 and S311 each contribute to the 2-oxoglutarate site.

The protein belongs to the iron/ascorbate-dependent oxidoreductase family. Requires L-ascorbate as cofactor. Fe(2+) is required as a cofactor.

It carries out the reaction (E)-4-coumaroyl-CoA + 2-oxoglutarate + O2 = (E)-2,4-dihydroxycinnamoyl-CoA + succinate + CO2. The catalysed reaction is (E)-feruloyl-CoA + 2-oxoglutarate + O2 = (E)-6-hydroxyferuloyl-CoA + succinate + CO2. It functions in the pathway phenylpropanoid metabolism. 2-oxoglutarate (OG)- and Fe(II)-dependent dioxygenase (2OGD) involved in scopoletin and umbelliferone biosynthesis. Converts feruloyl CoA into 6'-hydroxyferuloyl CoA, and p-coumaroyl CoA into 2,4-dihydroxycinnamoyl-CoA. The polypeptide is Bi-functional coumaroyl CoA and feruloyl CoA ortho-hydroxylase Diox2 (Ruta graveolens (Common rue)).